We begin with the raw amino-acid sequence, 616 residues long: Dihydroxy-acid dehydratase (616 aa).

Residue D81 coordinates Mg(2+). Position 122 (C122) interacts with [2Fe-2S] cluster. Mg(2+)-binding residues include D123 and K124. Position 124 is an N6-carboxylysine (K124). Position 195 (C195) interacts with [2Fe-2S] cluster. Residue E491 coordinates Mg(2+). S517 functions as the Proton acceptor in the catalytic mechanism.

This sequence belongs to the IlvD/Edd family. As to quaternary structure, homodimer. [2Fe-2S] cluster is required as a cofactor. Mg(2+) serves as cofactor.

It carries out the reaction (2R)-2,3-dihydroxy-3-methylbutanoate = 3-methyl-2-oxobutanoate + H2O. The catalysed reaction is (2R,3R)-2,3-dihydroxy-3-methylpentanoate = (S)-3-methyl-2-oxopentanoate + H2O. It functions in the pathway amino-acid biosynthesis; L-isoleucine biosynthesis; L-isoleucine from 2-oxobutanoate: step 3/4. The protein operates within amino-acid biosynthesis; L-valine biosynthesis; L-valine from pyruvate: step 3/4. Functionally, functions in the biosynthesis of branched-chain amino acids. Catalyzes the dehydration of (2R,3R)-2,3-dihydroxy-3-methylpentanoate (2,3-dihydroxy-3-methylvalerate) into 2-oxo-3-methylpentanoate (2-oxo-3-methylvalerate) and of (2R)-2,3-dihydroxy-3-methylbutanoate (2,3-dihydroxyisovalerate) into 2-oxo-3-methylbutanoate (2-oxoisovalerate), the penultimate precursor to L-isoleucine and L-valine, respectively. The polypeptide is Dihydroxy-acid dehydratase (Salmonella paratyphi A (strain ATCC 9150 / SARB42)).